Reading from the N-terminus, the 227-residue chain is Ribosomal RNA small subunit methyltransferase G (227 aa).

Residues Gly81, Leu86, 131-132, and Arg149 contribute to the S-adenosyl-L-methionine site; that span reads AE.

Belongs to the methyltransferase superfamily. RNA methyltransferase RsmG family.

It localises to the cytoplasm. Its function is as follows. Specifically methylates the N7 position of guanine in position 518 of 16S rRNA. This chain is Ribosomal RNA small subunit methyltransferase G, found in Rhodococcus jostii (strain RHA1).